Reading from the N-terminus, the 160-residue chain is Cytochrome b6-f complex subunit 4 (160 aa).

3 helical membrane passes run 36 to 56, 95 to 115, and 131 to 151; these read LLYI…GLAV, LLGI…PFIE, and SLFL…CLPI.

Belongs to the cytochrome b family. PetD subfamily. In terms of assembly, the 4 large subunits of the cytochrome b6-f complex are cytochrome b6, subunit IV (17 kDa polypeptide, PetD), cytochrome f and the Rieske protein, while the 4 small subunits are PetG, PetL, PetM and PetN. The complex functions as a dimer.

The protein localises to the cellular thylakoid membrane. Component of the cytochrome b6-f complex, which mediates electron transfer between photosystem II (PSII) and photosystem I (PSI), cyclic electron flow around PSI, and state transitions. The sequence is that of Cytochrome b6-f complex subunit 4 from Prochlorococcus marinus (strain NATL2A).